A 174-amino-acid chain; its full sequence is Crossover junction endodeoxyribonuclease RuvC (174 aa).

Active-site residues include D8, E69, and D141. Residues D8, E69, and D141 each contribute to the Mg(2+) site.

Belongs to the RuvC family. Homodimer which binds Holliday junction (HJ) DNA. The HJ becomes 2-fold symmetrical on binding to RuvC with unstacked arms; it has a different conformation from HJ DNA in complex with RuvA. In the full resolvosome a probable DNA-RuvA(4)-RuvB(12)-RuvC(2) complex forms which resolves the HJ. Requires Mg(2+) as cofactor.

It is found in the cytoplasm. It catalyses the reaction Endonucleolytic cleavage at a junction such as a reciprocal single-stranded crossover between two homologous DNA duplexes (Holliday junction).. In terms of biological role, the RuvA-RuvB-RuvC complex processes Holliday junction (HJ) DNA during genetic recombination and DNA repair. Endonuclease that resolves HJ intermediates. Cleaves cruciform DNA by making single-stranded nicks across the HJ at symmetrical positions within the homologous arms, yielding a 5'-phosphate and a 3'-hydroxyl group; requires a central core of homology in the junction. The consensus cleavage sequence is 5'-(A/T)TT(C/G)-3'. Cleavage occurs on the 3'-side of the TT dinucleotide at the point of strand exchange. HJ branch migration catalyzed by RuvA-RuvB allows RuvC to scan DNA until it finds its consensus sequence, where it cleaves and resolves the cruciform DNA. This Xanthomonas axonopodis pv. citri (strain 306) protein is Crossover junction endodeoxyribonuclease RuvC.